Consider the following 330-residue polypeptide: Dipeptide transport ATP-binding protein DppD (330 aa).

The ABC transporter domain maps to 6-254; it reads VKELSVHFGD…PKHPYTQALL (249 aa). 40-47 serves as a coordination point for ATP; that stretch reads GESGSGKS.

This sequence belongs to the ABC transporter superfamily.

It localises to the cell inner membrane. It carries out the reaction a dipeptide(out) + ATP + H2O = a dipeptide(in) + ADP + phosphate + H(+). Its function is as follows. Part of the ABC transporter DppBCDF involved in dipeptide transport. Responsible for energy coupling to the transport system. The chain is Dipeptide transport ATP-binding protein DppD (dppD) from Haemophilus influenzae (strain ATCC 51907 / DSM 11121 / KW20 / Rd).